The primary structure comprises 167 residues: G/U mismatch-specific DNA glycosylase (167 aa).

This sequence belongs to the uracil-DNA glycosylase (UDG) superfamily. TDG/mug family. In terms of assembly, binds DNA as a monomer.

The protein localises to the cytoplasm. It catalyses the reaction Specifically hydrolyzes mismatched double-stranded DNA and polynucleotides, releasing free uracil.. In terms of biological role, excises ethenocytosine and uracil, which can arise by alkylation or deamination of cytosine, respectively, from the corresponding mispairs with guanine in ds-DNA. It is capable of hydrolyzing the carbon-nitrogen bond between the sugar-phosphate backbone of the DNA and the mispaired base. The complementary strand guanine functions in substrate recognition. Required for DNA damage lesion repair in stationary-phase cells. This is G/U mismatch-specific DNA glycosylase from Pectobacterium atrosepticum (strain SCRI 1043 / ATCC BAA-672) (Erwinia carotovora subsp. atroseptica).